A 329-amino-acid polypeptide reads, in one-letter code: Biotin synthase (329 aa).

One can recognise a Radical SAM core domain in the interval Phe46 to Ser275. Residues Cys64, Cys68, and Cys71 each contribute to the [4Fe-4S] cluster site. The [2Fe-2S] cluster site is built by Cys108, Cys140, Cys200, and Arg273.

Belongs to the radical SAM superfamily. Biotin synthase family. In terms of assembly, homodimer. [4Fe-4S] cluster serves as cofactor. [2Fe-2S] cluster is required as a cofactor.

It catalyses the reaction (4R,5S)-dethiobiotin + (sulfur carrier)-SH + 2 reduced [2Fe-2S]-[ferredoxin] + 2 S-adenosyl-L-methionine = (sulfur carrier)-H + biotin + 2 5'-deoxyadenosine + 2 L-methionine + 2 oxidized [2Fe-2S]-[ferredoxin]. The protein operates within cofactor biosynthesis; biotin biosynthesis; biotin from 7,8-diaminononanoate: step 2/2. Functionally, catalyzes the conversion of dethiobiotin (DTB) to biotin by the insertion of a sulfur atom into dethiobiotin via a radical-based mechanism. The chain is Biotin synthase from Thermus thermophilus (strain ATCC 27634 / DSM 579 / HB8).